The primary structure comprises 1258 residues: Regulator of G-protein signaling 22 (1258 aa).

Positions 581-604 (QQLGRSEPLNAVSSKDGGLEKGSK) are disordered. RGS domains are found at residues 845–973 (TFTD…ASRQ) and 1014–1138 (AFRK…TDEK). The interval 1145 to 1172 (RRQEHKQKRKASDTEEDKAGKSGVKQYA) is disordered. Basic and acidic residues predominate over residues 1154 to 1164 (KASDTEEDKAG).

In terms of assembly, interacts with GNA11, GNA12 and GNA13. In terms of tissue distribution, expressed testis, including in Leydig cells and spermatogenic cells from the spermatogonia to spermatid stages (at protein level).

Its subcellular location is the cytoplasm. The protein resides in the nucleus. Functionally, inhibits signal transduction by increasing the GTPase activity of G protein alpha subunits thereby driving them into their inactive GDP-bound form. This Mus musculus (Mouse) protein is Regulator of G-protein signaling 22 (Rgs22).